The chain runs to 609 residues: Putative 4-coumarate--CoA ligase-like 8 (609 aa).

Positions 194, 195, 196, 197, 198, and 202 each coordinate ATP. Positions 252 and 256 each coordinate (E)-4-coumaroyl-AMP. Residue arginine 274 participates in CoA binding. The segment at 276–348 (SVEKTMAAVE…SCFPAVNLGQ (73 aa)) is SBD1. (E)-4-coumaroyl-AMP contacts are provided by glycine 326, glutamine 348, threonine 353, and methionine 361. Residues glutamine 348 and threonine 353 each contribute to the ATP site. Residues 349 to 450 (CYGLTETTGI…VRGPSTMRGY (102 aa)) are SBD2. 2 residues coordinate ATP: aspartate 482 and arginine 497. (E)-4-coumaroyl-AMP-binding residues include lysine 499 and lysine 503. Alanine 506 provides a ligand contact to CoA. Lysine 589 serves as a coordination point for ATP.

The protein belongs to the ATP-dependent AMP-binding enzyme family. It depends on Mg(2+) as a cofactor.

It catalyses the reaction (E)-4-coumarate + ATP + CoA = (E)-4-coumaroyl-CoA + AMP + diphosphate. It carries out the reaction (E)-4-coumarate + ATP + H(+) = (E)-4-coumaroyl-AMP + diphosphate. The catalysed reaction is (E)-4-coumaroyl-AMP + CoA = (E)-4-coumaroyl-CoA + AMP + H(+). Carboxylate--CoA ligase that may use 4-coumarate as substrate. Follows a two-step reaction mechanism, wherein the carboxylate substrate first undergoes adenylation by ATP, followed by a thioesterification in the presence of CoA to yield the final CoA thioester. In Oryza sativa subsp. japonica (Rice), this protein is Putative 4-coumarate--CoA ligase-like 8 (4CLL8).